Reading from the N-terminus, the 613-residue chain is Lysophospholipase 1 (613 aa).

The signal sequence occupies residues 1 to 21 (MLFRGLSLWMLFLASCLSALA). The region spanning 55–593 (DCPSDNIVES…YNYCWSGLYD (539 aa)) is the PLA2c domain. N-linked (GlcNAc...) asparagine glycans are attached at residues asparagine 142, asparagine 173, asparagine 220, asparagine 244, asparagine 281, asparagine 319, asparagine 348, asparagine 365, asparagine 494, asparagine 499, asparagine 523, asparagine 551, and asparagine 572.

This sequence belongs to the lysophospholipase family.

It is found in the secreted. It carries out the reaction a 1-acyl-sn-glycero-3-phosphocholine + H2O = sn-glycerol 3-phosphocholine + a fatty acid + H(+). Functionally, catalyzes the release of fatty acids from lysophospholipids. Required for survival under high osmolarity, for normal osmotic stress-induced gene expression, and for nutrient-mediated repression of sexual differentiation. This is Lysophospholipase 1 (plb1) from Schizosaccharomyces pombe (strain 972 / ATCC 24843) (Fission yeast).